The chain runs to 256 residues: Small ribosomal subunit protein uS2 (256 aa).

Residues 104–149 (NFKTISQRVHRLEELEALFASPEIEERPKKEQVRLKHELERLQKYL) adopt a coiled-coil conformation.

This sequence belongs to the universal ribosomal protein uS2 family. Part of the 30S ribosomal subunit. Contacts protein S8.

Spans the head-body hinge region of the 30S subunit. Is loosely associated with the 30S subunit. The sequence is that of Small ribosomal subunit protein uS2 (rpsB) from Thermus thermophilus (strain ATCC BAA-163 / DSM 7039 / HB27).